Consider the following 286-residue polypeptide: ATP synthase gamma chain (286 aa).

It belongs to the ATPase gamma chain family. F-type ATPases have 2 components, CF(1) - the catalytic core - and CF(0) - the membrane proton channel. CF(1) has five subunits: alpha(3), beta(3), gamma(1), delta(1), epsilon(1). CF(0) has three main subunits: a, b and c.

The protein localises to the cell inner membrane. Functionally, produces ATP from ADP in the presence of a proton gradient across the membrane. The gamma chain is believed to be important in regulating ATPase activity and the flow of protons through the CF(0) complex. This is ATP synthase gamma chain from Fuscovulum blasticum (Rhodobacter blasticus).